A 182-amino-acid chain; its full sequence is Spermatophorin SP23 (182 aa).

Residues 1–7 (MVASIAG) form the signal peptide. Disordered regions lie at residues 1–26 (MVASIAGEEEPAAEKSQQSPDHFQPY), 56–79 (FQTIAKPNEGPTDQPEANSANSIE), and 104–136 (IVVNQAPPPPPVIYQAPPPPPPPPIFQQAPPTI). Residues 109 to 128 (APPPPPVIYQAPPPPPPPPI) show a composition bias toward pro residues.

In terms of tissue distribution, spermatophore.

The protein resides in the secreted. Functionally, structural protein of a layer within the wall of the spermatophore produced probably by cell type 4 of the bean-shaped gland (BAG). Fixation in the spermatophore seems to require covalent cross-linking of spermatophorins. The protein is Spermatophorin SP23 (SP23) of Tenebrio molitor (Yellow mealworm beetle).